A 201-amino-acid chain; its full sequence is Putative pseudouridine methyltransferase (201 aa).

S-adenosyl-L-methionine contacts are provided by Met-132 and Cys-186.

The protein belongs to the methyltransferase superfamily. TrmY family.

Its subcellular location is the cytoplasm. The protein is Putative pseudouridine methyltransferase of Vibrio cholerae serotype O1 (strain ATCC 39315 / El Tor Inaba N16961).